The chain runs to 307 residues: Agmatinase (307 aa).

Mn(2+) contacts are provided by His128, Asp151, His153, Asp155, Asp232, and Asp234.

This sequence belongs to the arginase family. Agmatinase subfamily. It depends on Mn(2+) as a cofactor.

It catalyses the reaction agmatine + H2O = urea + putrescine. Its pathway is amine and polyamine biosynthesis; putrescine biosynthesis via agmatine pathway; putrescine from agmatine: step 1/1. In terms of biological role, catalyzes the formation of putrescine from agmatine. The sequence is that of Agmatinase from Neisseria meningitidis serogroup C (strain 053442).